Reading from the N-terminus, the 200-residue chain is 3-isopropylmalate dehydratase small subunit (200 aa).

It belongs to the LeuD family. LeuD type 1 subfamily. As to quaternary structure, heterodimer of LeuC and LeuD.

The enzyme catalyses (2R,3S)-3-isopropylmalate = (2S)-2-isopropylmalate. It participates in amino-acid biosynthesis; L-leucine biosynthesis; L-leucine from 3-methyl-2-oxobutanoate: step 2/4. Functionally, catalyzes the isomerization between 2-isopropylmalate and 3-isopropylmalate, via the formation of 2-isopropylmaleate. This Aliivibrio fischeri (strain ATCC 700601 / ES114) (Vibrio fischeri) protein is 3-isopropylmalate dehydratase small subunit.